A 72-amino-acid chain; its full sequence is Translation initiation factor IF-1 (72 aa).

In terms of domain architecture, S1-like spans 1-72 (MAKDDVIEVE…TRGRITYRYK (72 aa)). Position 60 is a phosphotyrosine (tyrosine 60).

It belongs to the IF-1 family. Component of the 30S ribosomal translation pre-initiation complex which assembles on the 30S ribosome in the order IF-2 and IF-3, IF-1 and N-formylmethionyl-tRNA(fMet); mRNA recruitment can occur at any time during PIC assembly.

It is found in the cytoplasm. In terms of biological role, one of the essential components for the initiation of protein synthesis. Stabilizes the binding of IF-2 and IF-3 on the 30S subunit to which N-formylmethionyl-tRNA(fMet) subsequently binds. Helps modulate mRNA selection, yielding the 30S pre-initiation complex (PIC). Upon addition of the 50S ribosomal subunit IF-1, IF-2 and IF-3 are released leaving the mature 70S translation initiation complex. This Bacillus licheniformis (strain ATCC 14580 / DSM 13 / JCM 2505 / CCUG 7422 / NBRC 12200 / NCIMB 9375 / NCTC 10341 / NRRL NRS-1264 / Gibson 46) protein is Translation initiation factor IF-1.